Reading from the N-terminus, the 166-residue chain is Transmembrane protein 278 (166 aa).

Residues 1–15 (MSDQERETEEDEGGD) show a composition bias toward acidic residues. Residues 1 to 28 (MSDQERETEEDEGGDPSDTAPMLPQRLP) form a disordered region. 3 helical membrane-spanning segments follow: residues 39 to 59 (GWAS…WALA), 65 to 85 (LLLP…VVYL), and 111 to 131 (AAVI…ASAA).

The protein belongs to the TMEM88 family.

It localises to the membrane. This Bos taurus (Bovine) protein is Transmembrane protein 278 (TMEM278).